The chain runs to 690 residues: Eukaryotic translation initiation factor 3 subunit B (690 aa).

Residues 1–11 (MAKKKSEDHSG) are compositionally biased toward basic and acidic residues. The tract at residues 1-37 (MAKKKSEDHSGGDANDSDYNEEPNFEDPPNFVDNISD) is disordered. Residues 15–25 (NDSDYNEEPNF) are compositionally biased toward acidic residues. In terms of domain architecture, RRM spans 57-141 (SVVVVDNIPK…HTFAVNLFTD (85 aa)). WD repeat units follow at residues 207-246 (TRERFTDTFVKWSPLGTYVVTFHKPGVAIWGGSSFQKIQK), 247-289 (FPHT…EKRS), 293-331 (DGMSVLSMFRWSHDDKYVARMGDNSIHIYETPSFYLLDL), 334-369 (IKIPGIRGFSWSPTDNVIAYWVEEQNQIPARVTLME), 442-484 (EIRE…KPSL), and 530-575 (PDHF…IKRT). Positions 614–645 (QKDRLRLTRASKELLEKRSQLRETFMEYRNKR) form a coiled coil.

It belongs to the eIF-3 subunit B family. In terms of assembly, component of the eukaryotic translation initiation factor 3 (eIF-3) complex. The eIF-3 complex interacts with pix. Interacts with mxt.

It localises to the cytoplasm. RNA-binding component of the eukaryotic translation initiation factor 3 (eIF-3) complex, which is involved in protein synthesis of a specialized repertoire of mRNAs and, together with other initiation factors, stimulates binding of mRNA and methionyl-tRNAi to the 40S ribosome. The eIF-3 complex specifically targets and initiates translation of a subset of mRNAs involved in cell proliferation. This chain is Eukaryotic translation initiation factor 3 subunit B, found in Drosophila pseudoobscura pseudoobscura (Fruit fly).